A 156-amino-acid chain; its full sequence is MRAVIQRVKKASVKVNGELISQISQGLLIFLGISKKDKEEDIKILADKIADLRIFSDENGKMNLSIKEVNGDILVVSQFTLFADCRRGKRPDFTDAADKEKALDYYKKFVAYLKNKSEKVEEGIFQAYMEVELINDGPVTIILDTEDLKKPRRRKE.

The short motif at 137 to 138 (GP) is the Gly-cisPro motif, important for rejection of L-amino acids element.

It belongs to the DTD family. As to quaternary structure, homodimer.

It is found in the cytoplasm. The catalysed reaction is glycyl-tRNA(Ala) + H2O = tRNA(Ala) + glycine + H(+). It catalyses the reaction a D-aminoacyl-tRNA + H2O = a tRNA + a D-alpha-amino acid + H(+). An aminoacyl-tRNA editing enzyme that deacylates mischarged D-aminoacyl-tRNAs. Also deacylates mischarged glycyl-tRNA(Ala), protecting cells against glycine mischarging by AlaRS. Acts via tRNA-based rather than protein-based catalysis; rejects L-amino acids rather than detecting D-amino acids in the active site. By recycling D-aminoacyl-tRNA to D-amino acids and free tRNA molecules, this enzyme counteracts the toxicity associated with the formation of D-aminoacyl-tRNA entities in vivo and helps enforce protein L-homochirality. The sequence is that of D-aminoacyl-tRNA deacylase from Dictyoglomus turgidum (strain DSM 6724 / Z-1310).